The primary structure comprises 236 residues: MASSNFLVLLLFALFVIPQGLANYDKPPVYQPPVYKPPVEKPPVYKPPVEKPPVYKPPVYKPPVEKPPVYKPPVVKPPVYKPPVYKPPVYKPPVEKPPVYKPPVYKPPVYKPPVVKPPVYKPPVYKPPVEKPPVYKPPVYKPPVEKPPVYKPPVEKPPVYKPPVYKPPVYKPPVVKPPVYKPPVYKPPVYKPPVEKPPVYKPPVYKPPVEKPPVYKPPVYKPPVEKPPVYGPPHHP.

The signal sequence occupies residues 1 to 22 (MASSNFLVLLLFALFVIPQGLA). A run of 41 repeats spans residues 27–31 (PPVYQ), 32–36 (PPVYK), 37–41 (PPVEK), 42–46 (PPVYK), 47–51 (PPVEK), 52–56 (PPVYK), 57–61 (PPVYK), 62–66 (PPVEK), 67–71 (PPVYK), 72–76 (PPVVK), 77–81 (PPVYK), 82–86 (PPVYK), 87–91 (PPVYK), 92–96 (PPVEK), 97–101 (PPVYK), 102–106 (PPVYK), 107–111 (PPVYK), 112–116 (PPVVK), 117–121 (PPVYK), 122–126 (PPVYK), 127–131 (PPVEK), 132–136 (PPVYK), 137–141 (PPVYK), 142–146 (PPVEK), 147–151 (PPVYK), 152–156 (PPVEK), 157–161 (PPVYK), 162–166 (PPVYK), 167–171 (PPVYK), 172–176 (PPVVK), 177–181 (PPVYK), 182–186 (PPVYK), 187–191 (PPVYK), 192–196 (PPVEK), 197–201 (PPVYK), 202–206 (PPVYK), 207–211 (PPVEK), 212–216 (PPVYK), 217–221 (PPVYK), 222–226 (PPVEK), and 227–231 (PPVYG). The segment at 27-236 (PPVYQPPVYK…PPVYGPPHHP (210 aa)) is 42 X 5 AA approximate tandem repeats of P-P-V-[EYV]-[KQG]. A disordered region spans residues 143 to 177 (PVEKPPVYKPPVEKPPVYKPPVYKPPVYKPPVVKP). Residues 204-236 (VYKPPVEKPPVYKPPVYKPPVEKPPVYGPPHHP) are disordered. A 42; approximate repeat occupies 232 to 236 (PPHHP).

This sequence belongs to the plant proline-rich protein superfamily. ENOD12 family.

It is found in the secreted. The protein resides in the cell wall. This is a developmentally regulated putative cell wall protein. The polypeptide is Repetitive proline-rich cell wall protein (PRP) (Medicago sativa (Alfalfa)).